A 737-amino-acid polypeptide reads, in one-letter code: Phosphoribosylformylglycinamidine synthase subunit PurL (737 aa).

His50 is an active-site residue. 2 residues coordinate ATP: Tyr53 and Lys92. Residue Glu94 coordinates Mg(2+). Residues 95–98 (SHNH) and Arg117 contribute to the substrate site. His96 (proton acceptor) is an active-site residue. Asp118 lines the Mg(2+) pocket. Gln241 contributes to the substrate binding site. Asp269 provides a ligand contact to Mg(2+). 313 to 315 (ESQ) is a substrate binding site. ATP-binding residues include Asp494 and Gly531. Residue Asn532 coordinates Mg(2+). Substrate is bound at residue Ser534.

Belongs to the FGAMS family. Monomer. Part of the FGAM synthase complex composed of 1 PurL, 1 PurQ and 2 PurS subunits.

The protein resides in the cytoplasm. The catalysed reaction is N(2)-formyl-N(1)-(5-phospho-beta-D-ribosyl)glycinamide + L-glutamine + ATP + H2O = 2-formamido-N(1)-(5-O-phospho-beta-D-ribosyl)acetamidine + L-glutamate + ADP + phosphate + H(+). The protein operates within purine metabolism; IMP biosynthesis via de novo pathway; 5-amino-1-(5-phospho-D-ribosyl)imidazole from N(2)-formyl-N(1)-(5-phospho-D-ribosyl)glycinamide: step 1/2. In terms of biological role, part of the phosphoribosylformylglycinamidine synthase complex involved in the purines biosynthetic pathway. Catalyzes the ATP-dependent conversion of formylglycinamide ribonucleotide (FGAR) and glutamine to yield formylglycinamidine ribonucleotide (FGAM) and glutamate. The FGAM synthase complex is composed of three subunits. PurQ produces an ammonia molecule by converting glutamine to glutamate. PurL transfers the ammonia molecule to FGAR to form FGAM in an ATP-dependent manner. PurS interacts with PurQ and PurL and is thought to assist in the transfer of the ammonia molecule from PurQ to PurL. The sequence is that of Phosphoribosylformylglycinamidine synthase subunit PurL from Nitrobacter winogradskyi (strain ATCC 25391 / DSM 10237 / CIP 104748 / NCIMB 11846 / Nb-255).